The following is a 384-amino-acid chain: Zinc finger protein GLIS2 homolog (384 aa).

The C2H2-type 1 zinc-finger motif lies at 128–153 (FVCNWTDCDRVFDTLDALAQHVTQRH). A C2H2-type 2; degenerate zinc finger spans residues 163–190 (YYCRWRGCQRSERGFNARYKMLVHTRTH). 3 consecutive C2H2-type zinc fingers follow at residues 196 to 218 (HRCH…IRSH), 224 to 248 (YKCS…TRTH), and 254 to 280 (YMCK…TFKH). The disordered stretch occupies residues 321 to 343 (SSSSARYYDDSNNEPSDYSLKPK).

The protein belongs to the GLI C2H2-type zinc-finger protein family.

It localises to the nucleus. Functionally, transcription factor which represses a set of lipase genes involved in fat catabolism. The sequence is that of Zinc finger protein GLIS2 homolog (sug) from Drosophila melanogaster (Fruit fly).